The following is a 677-amino-acid chain: Epithelial splicing regulatory protein 1 (677 aa).

RRM domains are found at residues 225-302, 326-406, and 445-525; these read TVVR…KATG, VIVR…RSTA, and DCVR…QCSA. Ser-543 carries the post-translational modification Phosphoserine. Arg-578 carries the post-translational modification Omega-N-methylarginine.

This sequence belongs to the ESRP family.

It is found in the nucleus. Its function is as follows. mRNA splicing factor that regulates the formation of epithelial cell-specific isoforms. Specifically regulates the expression of FGFR2-IIIb, an epithelial cell-specific isoform of FGFR2. Also regulates the splicing of CD44, CTNND1, ENAH, 3 transcripts that undergo changes in splicing during the epithelial-to-mesenchymal transition (EMT). Acts by directly binding specific sequences in mRNAs. Binds the GU-rich sequence motifs in the ISE/ISS-3, a cis-element regulatory region present in the mRNA of FGFR2. Regulates splicing and expression of genes involved in inner ear development, auditory hair cell differentiation, and cell fate specification in the cochlear epithelium. The chain is Epithelial splicing regulatory protein 1 (Esrp1) from Rattus norvegicus (Rat).